The following is a 339-amino-acid chain: UDP-N-acetylglucosamine--N-acetylmuramyl-(pentapeptide) pyrophosphoryl-undecaprenol N-acetylglucosamine transferase (339 aa).

UDP-N-acetyl-alpha-D-glucosamine contacts are provided by residues 9–11 (TGG), Asn119, Arg160, Ser188, and Gln280.

Belongs to the glycosyltransferase 28 family. MurG subfamily.

It is found in the cell inner membrane. The catalysed reaction is di-trans,octa-cis-undecaprenyl diphospho-N-acetyl-alpha-D-muramoyl-L-alanyl-D-glutamyl-meso-2,6-diaminopimeloyl-D-alanyl-D-alanine + UDP-N-acetyl-alpha-D-glucosamine = di-trans,octa-cis-undecaprenyl diphospho-[N-acetyl-alpha-D-glucosaminyl-(1-&gt;4)]-N-acetyl-alpha-D-muramoyl-L-alanyl-D-glutamyl-meso-2,6-diaminopimeloyl-D-alanyl-D-alanine + UDP + H(+). It functions in the pathway cell wall biogenesis; peptidoglycan biosynthesis. Functionally, cell wall formation. Catalyzes the transfer of a GlcNAc subunit on undecaprenyl-pyrophosphoryl-MurNAc-pentapeptide (lipid intermediate I) to form undecaprenyl-pyrophosphoryl-MurNAc-(pentapeptide)GlcNAc (lipid intermediate II). This Thermus thermophilus (strain ATCC BAA-163 / DSM 7039 / HB27) protein is UDP-N-acetylglucosamine--N-acetylmuramyl-(pentapeptide) pyrophosphoryl-undecaprenol N-acetylglucosamine transferase.